The primary structure comprises 290 residues: Tubulin polyglutamylase complex subunit 1 (290 aa).

Positions Met1–Gly30 are disordered. Residues Ser34 and Ser266 each carry the phosphoserine modification.

As to quaternary structure, part of the neuronal tubulin polyglutamylase complex which contains TPGS1, TPGS2, TTLL1, LRRC49 and NICN1. Interacts with PCM1, CSTPP1 and LRRC49.

The protein localises to the cytoplasm. The protein resides in the cytoskeleton. It localises to the cilium axoneme. It is found in the flagellum axoneme. Its subcellular location is the cilium basal body. The protein localises to the flagellum basal body. The protein resides in the cell projection. It localises to the axon. It is found in the dendrite. Its subcellular location is the microtubule organizing center. The protein localises to the centrosome. The protein resides in the centriolar satellite. In terms of biological role, subunit of the tubulin polyglutamylase complex (TPGC). The complex mediates cilia and flagella polyglutamylation which is essential for their biogenesis and motility. May act in the targeting of the tubulin polyglutamylase complex. Required for the development of the spermatid flagellum. The sequence is that of Tubulin polyglutamylase complex subunit 1 from Homo sapiens (Human).